A 685-amino-acid chain; its full sequence is Multisite-specific tRNA:(cytosine-C(5))-methyltransferase trm4b (685 aa).

S-adenosyl-L-methionine is bound by residues 167 to 173 (CAAPGSK), Asp208, Asp235, and Asp270. Residue Cys323 is the Nucleophile of the active site.

This sequence belongs to the class I-like SAM-binding methyltransferase superfamily. RsmB/NOP family. TRM4 subfamily.

It localises to the nucleus. The enzyme catalyses cytidine(49) in tRNA precursor + S-adenosyl-L-methionine = 5-methylcytidine(49) in tRNA precursor + S-adenosyl-L-homocysteine + H(+). It carries out the reaction cytidine(50) in tRNA + S-adenosyl-L-methionine = 5-methylcytidine(50) in tRNA + S-adenosyl-L-homocysteine + H(+). The catalysed reaction is cytidine(60) in tRNA(Asp) + S-adenosyl-L-methionine = 5-methylcytidine(60) in tRNA(Asp) + S-adenosyl-L-homocysteine + H(+). It catalyses the reaction cytidine(61) in tRNA(Asp) + S-adenosyl-L-methionine = 5-methylcytidine(61) in tRNA(Asp) + S-adenosyl-L-homocysteine + H(+). The enzyme catalyses cytidine(62) in tRNA(Asp) + S-adenosyl-L-methionine = 5-methylcytidine(62) in tRNA(Asp) + S-adenosyl-L-homocysteine + H(+). In terms of biological role, tRNA cytosine C(5)-methyltransferase that methylates cytosine to 5-methylcytosine (m5C) in tRNAs at position 49 and 50. Trm4a and trm4b methylate different sets of tRNAs. Also methylates cytosine to m5C at positions (60, 61 and 62) in tRNA(Asp). This chain is Multisite-specific tRNA:(cytosine-C(5))-methyltransferase trm4b, found in Schizosaccharomyces pombe (strain 972 / ATCC 24843) (Fission yeast).